A 443-amino-acid chain; its full sequence is ATP-dependent protease ATPase subunit HslU (443 aa).

ATP-binding positions include V18 and 60–65 (GVGKTE). Residues 139–160 (AKNNWGQPEESGEPSSARQNFR) are disordered. ATP-binding residues include D256, E321, and R393.

Belongs to the ClpX chaperone family. HslU subfamily. A double ring-shaped homohexamer of HslV is capped on each side by a ring-shaped HslU homohexamer. The assembly of the HslU/HslV complex is dependent on binding of ATP.

Its subcellular location is the cytoplasm. In terms of biological role, ATPase subunit of a proteasome-like degradation complex; this subunit has chaperone activity. The binding of ATP and its subsequent hydrolysis by HslU are essential for unfolding of protein substrates subsequently hydrolyzed by HslV. HslU recognizes the N-terminal part of its protein substrates and unfolds these before they are guided to HslV for hydrolysis. The chain is ATP-dependent protease ATPase subunit HslU from Sodalis glossinidius (strain morsitans).